The following is a 122-amino-acid chain: MGNVIKSQVGAQALGKNVRVSVTKMQRIIDRIRNCSYEEALVLLEFMPYRACYPVSQLVLSAAANASNNLGLNKSDLFVSKAWVDNSKYLRRFRPRAQGRGYPIKKPTCKVTIQLSSKSIEK.

The protein belongs to the universal ribosomal protein uL22 family. Part of the 50S ribosomal subunit.

It localises to the plastid. The protein localises to the chloroplast. Its function is as follows. This protein binds specifically to 23S rRNA. In terms of biological role, the globular domain of the protein is located near the polypeptide exit tunnel on the outside of the subunit, while an extended beta-hairpin is found that lines the wall of the exit tunnel in the center of the 70S ribosome. The protein is Large ribosomal subunit protein uL22c (rpl22) of Adiantum capillus-veneris (Maidenhair fern).